Consider the following 284-residue polypeptide: MSAHTRITRKTVTAIRSTKGIGSLVSLTAYSAPMAKLVDEVADVIIVGDSVGMVLYGMPDTLRVTLDMMIAHGAAVVRGAAQACVVVDLPFSTFQESPAQAYRSAARLLAETGAQAVKLEGGCEMTDTIRFLTDRGIPVMAHVGLMPQQANAAGGFRAQGMDPRSAAQVFDAACAAERAGAFSVVIEGTAEALARHLTETLTIPTIGIGASPACDGQVLVTEDMIGAFDAYTPRFVKRYADANAVMRDAIRQYAHDVRQRVFPEPAHCFGYGKPLQLADAATAA.

Positions 49 and 88 each coordinate Mg(2+). 3-methyl-2-oxobutanoate contacts are provided by residues 49-50, Asp-88, and Lys-118; that span reads DS. Glu-120 contributes to the Mg(2+) binding site. Glu-187 (proton acceptor) is an active-site residue.

This sequence belongs to the PanB family. As to quaternary structure, homodecamer; pentamer of dimers. It depends on Mg(2+) as a cofactor.

The protein localises to the cytoplasm. The catalysed reaction is 3-methyl-2-oxobutanoate + (6R)-5,10-methylene-5,6,7,8-tetrahydrofolate + H2O = 2-dehydropantoate + (6S)-5,6,7,8-tetrahydrofolate. It participates in cofactor biosynthesis; (R)-pantothenate biosynthesis; (R)-pantoate from 3-methyl-2-oxobutanoate: step 1/2. Functionally, catalyzes the reversible reaction in which hydroxymethyl group from 5,10-methylenetetrahydrofolate is transferred onto alpha-ketoisovalerate to form ketopantoate. The sequence is that of 3-methyl-2-oxobutanoate hydroxymethyltransferase 2 from Burkholderia cenocepacia (strain HI2424).